Reading from the N-terminus, the 483-residue chain is Linamarin synthase 1 (483 aa).

Catalysis depends on His-22, which acts as the Proton acceptor. Residue His-22 coordinates an anthocyanidin. Asp-124 (charge relay) is an active-site residue. 8 residues coordinate UDP-alpha-D-glucose: Thr-146, Val-360, Gln-362, His-377, Trp-380, Asn-381, Ser-382, and Glu-385. Ala-400 serves as a coordination point for an anthocyanidin. 2 residues coordinate UDP-alpha-D-glucose: Glu-401 and Gln-402.

This sequence belongs to the UDP-glycosyltransferase family. As to expression, expressed in the cortex, xylem and phloem parenchyma, and in specific cells in the endodermis of the petiole of the first unfolded leaf.

It carries out the reaction 2-hydroxy-2-methylpropanenitrile + UDP-alpha-D-glucose = linamarin + UDP + H(+). UDP-glucosyltransferase catalyzing in planta synthesis of cyanogenic glucosides. Able to glucosylate acetone cyanohydrin and 2-hydroxy-2-methylbutyronitrile, forming linamarin and lotaustralin. Also accepts, to some extent, a wide range of potential acceptor substrates, including simple alcohols, flavonoids, isoflavonoids and other hydroxynitriles such as p-hydroxymandelonitrile, mandelonitrile, (E)-4-hydroxy-2-methylbut-2-enenitrile and (E)- 2-(hydroxymethyl)but-2-enenitrile. In Manihot esculenta (Cassava), this protein is Linamarin synthase 1.